Consider the following 581-residue polypeptide: ATP-dependent lipid A-core flippase (581 aa).

The next 6 membrane-spanning stretches (helical) occupy residues 21-41 (TVAI…ALFI), 65-85 (FVVI…SYCL), 138-158 (ALLI…VMFY), 161-181 (WQLS…VTVV), 246-266 (LSVS…LWVV), and 271-291 (MIDT…MMLL). An ABC transmembrane type-1 domain is found at 24-306 (IVAIIGMIGY…LANVNSDMQR (283 aa)). Residues 338–575 (IEVKNVTFKY…NGTYSALCKM (238 aa)) enclose the ABC transporter domain. 372–379 (GRSGSGKS) contacts ATP.

This sequence belongs to the ABC transporter superfamily. Lipid exporter (TC 3.A.1.106) family. Homodimer.

It is found in the cell inner membrane. The catalysed reaction is ATP + H2O + lipid A-core oligosaccharideSide 1 = ADP + phosphate + lipid A-core oligosaccharideSide 2.. Involved in lipopolysaccharide (LPS) biosynthesis. Translocates lipid A-core from the inner to the outer leaflet of the inner membrane. Transmembrane domains (TMD) form a pore in the inner membrane and the ATP-binding domain (NBD) is responsible for energy generation. The sequence is that of ATP-dependent lipid A-core flippase from Pseudoalteromonas translucida (strain TAC 125).